The primary structure comprises 306 residues: D-alanine--D-alanine ligase (306 aa).

Residues 104–303 enclose the ATP-grasp domain; sequence KMLWKAFGLP…FEQLVVKILE (200 aa). 134–189 serves as a coordination point for ATP; the sequence is VAKLGLPLMVKPSLEGSSVGLTKVKAVEELKSAVEYALKFDNTILIEEWLAGDELT. Mg(2+) is bound by residues aspartate 257, glutamate 270, and asparagine 272.

This sequence belongs to the D-alanine--D-alanine ligase family. It depends on Mg(2+) as a cofactor. Requires Mn(2+) as cofactor.

The protein localises to the cytoplasm. The catalysed reaction is 2 D-alanine + ATP = D-alanyl-D-alanine + ADP + phosphate + H(+). It functions in the pathway cell wall biogenesis; peptidoglycan biosynthesis. Its function is as follows. Cell wall formation. The polypeptide is D-alanine--D-alanine ligase (Haemophilus influenzae (strain PittGG)).